Here is a 202-residue protein sequence, read N- to C-terminus: Adapter protein MecA 2 (202 aa).

Belongs to the MecA family. As to quaternary structure, homodimer.

Enables the recognition and targeting of unfolded and aggregated proteins to the ClpC protease or to other proteins involved in proteolysis. Acts negatively in the development of competence by binding ComK and recruiting it to the ClpCP protease. When overexpressed, inhibits sporulation. Also involved in Spx degradation by ClpC. The sequence is that of Adapter protein MecA 2 (mecA2) from Bacillus cereus (strain ATCC 14579 / DSM 31 / CCUG 7414 / JCM 2152 / NBRC 15305 / NCIMB 9373 / NCTC 2599 / NRRL B-3711).